We begin with the raw amino-acid sequence, 222 residues long: Glutathione S-transferase alpha-4 (222 aa).

An N-acetylmethionine modification is found at Met-1. The GST N-terminal domain maps to 3–83 (VKPKLYYFQG…YLAAKYNLYG (81 aa)). Glutathione-binding positions include Tyr-9, 54-55 (QV), and 67-68 (QT). Residues 85–208 (DLKERVRIDM…QPGSQRKPPP (124 aa)) enclose the GST C-terminal domain.

Belongs to the GST superfamily. Alpha family. As to quaternary structure, homodimer.

It localises to the cytoplasm. The enzyme catalyses RX + glutathione = an S-substituted glutathione + a halide anion + H(+). Functionally, conjugation of reduced glutathione to a wide number of exogenous and endogenous hydrophobic electrophiles. This is Glutathione S-transferase alpha-4 (Gsta4) from Rattus norvegicus (Rat).